The following is a 217-amino-acid chain: Aminopyrimidine aminohydrolase (217 aa).

D44 contributes to the substrate binding site. The active-site Nucleophile is the C135. Positions 139 and 165 each coordinate substrate. E207 serves as the catalytic Proton donor.

This sequence belongs to the TenA family. Homotetramer.

It carries out the reaction 4-amino-5-aminomethyl-2-methylpyrimidine + H2O = 4-amino-5-hydroxymethyl-2-methylpyrimidine + NH4(+). It functions in the pathway cofactor biosynthesis; thiamine diphosphate biosynthesis. Functionally, catalyzes an amino-pyrimidine hydrolysis reaction at the C5' of the pyrimidine moiety of thiamine compounds to give a hydroxymethylpyrimidine (HMP). Displays low activity on 4-amino-5-aminomethyl-2-methylpyrimidine as substrate, indicating that the enzyme may act on a different HMP precursor that may derive from the human stomach food assumption or processing. Is probably involved in thiamine biosynthesis. Does not display thiaminase II activity, as it is unable to hydrolyze thiamine. This is Aminopyrimidine aminohydrolase from Helicobacter pylori (Campylobacter pylori).